The sequence spans 78 residues: Transmembrane protein 258 (78 aa).

Topologically, residues 1–18 are cytoplasmic; the sequence is MDVMQRYVSPVNPAVFPH. The helical transmembrane segment at 19 to 39 threads the bilayer; sequence LATVLLVIGTFFTAWFFIFVV. Topologically, residues 40–53 are cytoplasmic; that stretch reads SRKSSKESTLIKEL. The helical transmembrane segment at 54-74 threads the bilayer; it reads LISLCASIFLGFGIVFLLLTV. At 75–78 the chain is on the perinuclear space side; that stretch reads GIYV.

It belongs to the OST5 family. As to quaternary structure, homodimer. Component of the oligosaccharyltransferase (OST) complex. Interacts with klar and Msp300, components of LINC complex.

It is found in the nucleus outer membrane. Its subcellular location is the cytoplasm. It localises to the endoplasmic reticulum membrane. Subunit of the oligosaccharyl transferase (OST) complex that catalyzes the initial transfer of a defined glycan (Glc(3)Man(9)GlcNAc(2) in eukaryotes) from the lipid carrier dolichol-pyrophosphate to an asparagine residue within an Asn-X-Ser/Thr consensus motif in nascent polypeptide chains, the first step in protein N-glycosylation. N-glycosylation occurs cotranslationally and the complex associates with the Sec61 complex at the channel-forming translocon complex that mediates protein translocation across the endoplasmic reticulum (ER). All subunits are required for a maximal enzyme activity. In addition may regulates nuclear envelope (NE) architecture and nuclear positioning through the linker of nucleoskeleton and cytoskeleton (LINC)-dependent and -independent mechanisms. This Drosophila melanogaster (Fruit fly) protein is Transmembrane protein 258.